The chain runs to 121 residues: uncharacterized protein (121 aa).

The segment at 100-121 (KSFSNTKDGKKNDDDNNSSSKS) is disordered.

This is an uncharacterized protein from Mycoplasma pneumoniae (strain ATCC 29342 / M129 / Subtype 1) (Mycoplasmoides pneumoniae).